The primary structure comprises 1383 residues: Insulin receptor (1383 aa).

Residues 1–26 (MGSGRGCETTAVPLLMAVAVAGGTAG) form the signal peptide. Extracellular-facing segments span residues 27-759 (HLYP…TRPS) and 764-957 (SLEE…NIAK). C34 and C52 are joined by a disulfide. N-linked (GlcNAc...) asparagine glycosylation is found at N42, N51, N104, and N137. Intrachain disulfides connect C152-C181, C185-C208, C195-C214, C218-C227, C222-C233, C234-C242, C238-C251, C254-C263, and C267-C279. N-linked (GlcNAc...) asparagine glycosylation occurs at N241. N281 carries N-linked (GlcNAc...) asparagine glycosylation. 5 cysteine pairs are disulfide-bonded: C285-C310, C292-C300, C314-C327, C330-C334, and C338-C359. N321 is a glycosylation site (N-linked (GlcNAc...) asparagine). N363 carries N-linked (GlcNAc...) asparagine glycosylation. S399 carries the post-translational modification Phosphoserine. Position 400 is a phosphotyrosine (Y400). A Phosphoserine modification is found at S406. 2 N-linked (GlcNAc...) asparagine glycosylation sites follow: N423 and N444. A disulfide bridge links C461 with C494. 4 N-linked (GlcNAc...) asparagine glycosylation sites follow: N540, N634, N652, and N699. One can recognise a Fibronectin type-III 1 domain in the interval 625–727 (VPLDPISVSN…SQILKELEES (103 aa)). A disulfide bridge connects residues C675 and C900. The interval 687–709 (SPPFESDDSQKHNQSEYDDSASE) is disordered. An insulin-binding region spans residues 734-742 (EDYLHNVVF). The interval 747 to 783 (TSSGNGAEDTRPSRKRRSLEEVGNVTATTPTLPDFPN) is disordered. Fibronectin type-III domains follow at residues 754–848 (EDTR…TMPE) and 854–948 (IVGP…VTDY). N770, N783, N921, and N934 each carry an N-linked (GlcNAc...) asparagine glycan. The span at 771-783 (VTATTPTLPDFPN) shows a compositional bias: polar residues. A helical membrane pass occupies residues 958-978 (IIIGPLIFVFLFSVVIGSIYL). At 979 to 1383 (FLRKRQPDGP…VLTLPRSNPS (405 aa)) the chain is on the cytoplasmic side. The tract at residues 997 to 1000 (NPEY) is important for interaction with IRS1, SHC1 and STAT5B. Y1000 is modified (phosphotyrosine; by autocatalysis). The Protein kinase domain maps to 1024–1299 (ITLLRELGQG…LLKDDLHPSF (276 aa)). Positions 1034 and 1058 each coordinate ATP. K1080 participates in a covalent cross-link: Glycyl lysine isopeptide (Lys-Gly) (interchain with G-Cter in ubiquitin). C1084 bears the S-nitrosocysteine mark. 1105-1111 (ELMAHGD) is an ATP binding site. D1160 (proton donor/acceptor) is an active-site residue. ATP-binding positions include 1164–1165 (RN) and D1178. 5 positions are modified to phosphotyrosine; by autocatalysis: Y1186, Y1190, Y1191, Y1356, and Y1362. The interval 1361–1383 (PYTHMNGGKKNGRVLTLPRSNPS) is disordered. Residues 1362-1365 (YTHM) form a PIK3R1 binding region.

It belongs to the protein kinase superfamily. Tyr protein kinase family. Insulin receptor subfamily. As to quaternary structure, tetramer of 2 alpha and 2 beta chains linked by disulfide bonds. The alpha chains carry the insulin-binding regions, while the beta chains carry the kinase domain. Forms a hybrid receptor with IGF1R, the hybrid is a tetramer consisting of 1 alpha chain and 1 beta chain of INSR and 1 alpha chain and 1 beta chain of IGF1R. Interacts with SORBS1 but dissociates from it following insulin stimulation. Binds SH2B2. Activated form of INSR interacts (via Tyr-1000) with the PTB/PID domains of IRS1 and SHC1. The sequences surrounding the phosphorylated NPXY motif contribute differentially to either IRS1 or SHC1 recognition. Interacts (via tyrosines in the C-terminus) with IRS2 (via PTB domain and 591-786 AA); the 591-786 would be the primary anchor of IRS2 to INSR while the PTB domain would have a stabilizing action on the interaction with INSR. Interacts with the SH2 domains of the 85 kDa regulatory subunit of PI3K (PIK3R1) in vitro, when autophosphorylated on tyrosine residues. Interacts with SOCS7. Interacts (via the phosphorylated Tyr-1000), with SOCS3. Interacts (via the phosphorylated Tyr-1186, Tyr-1190, Tyr-1191) with SOCS1. Interacts with ARRB2. Interacts with GRB10; this interaction blocks the association between IRS1/IRS2 and INSR, significantly reduces insulin-stimulated tyrosine phosphorylation of IRS1 and IRS2 and thus decreases insulin signaling. Interacts with PDPK1. Interacts (via Tyr-1191) with GRB14 (via BPS domain); this interaction protects the tyrosines in the activation loop from dephosphorylation, but promotes dephosphorylation of Tyr-1000, this results in decreased interaction with, and phosphorylation of, IRS1. Interacts (via subunit alpha) with ENPP1 (via 485-599 AA); this interaction blocks autophosphorylation. Interacts with PTPRE; this interaction is dependent of Tyr-1186, Tyr-1190 and Tyr-1191 of the INSR. Interacts with STAT5B (via SH2 domain). Interacts with PTPRF. Interacts with GRB7. Interacts with CAV2 (tyrosine-phosphorylated form); the interaction is increased with 'Tyr-27'phosphorylation of CAV2. Interacts with ATIC; ATIC together with PRKAA2/AMPK2 and HACD3/PTPLAD1 is proposed to be part of a signaling netwok regulating INSR autophosphorylation and endocytosis. Interacts with the insulin receptor SORL1; this interaction strongly increases its surface exposure, hence strengthens insulin signal reception. Interacts (tyrosine phosphorylated) with CCDC88A/GIV (via SH2-like region); binding requires autophosphorylation of the Insr C-terminal region. Interacts with GNAI3; the interaction is probably mediated by CCDC88A/GIV. Interacts with LMBRD1. Interacts (in response to insulin stimulation) with NCK1; this interaction may recruit PTPN1 to mediate INSR dephosphorylation. Interacts with CD248; this interaction diminishes INSR autophosphorylation. After being transported from the endoplasmic reticulum to the Golgi apparatus, the single glycosylated precursor is further glycosylated and then cleaved, followed by its transport to the plasma membrane. Post-translationally, autophosphorylated on tyrosine residues in response to insulin. Phosphorylation of Tyr-1000 is required for binding to IRS1, SHC1 and STAT5B. May also be phosphorylated at Tyr-1186 and Tyr-1191 by mTORC2. Dephosphorylated by PTPRE at Tyr-1000, Tyr-1186, Tyr-1190 and Tyr-1191. Dephosphorylated by PTPRF and PTPN1. Dephosphorylated by PTPN2; down-regulates insulin-induced signaling. In terms of processing, S-nitrosylation at Cys-1084 by BLVRB inhibits the receptor tyrosine kinase, thereby inhibiting insulin signaling. Ubiquitinated by MARCHF1; leading to degradation thereby reducing surface INSR expression.

Its subcellular location is the cell membrane. The protein localises to the late endosome. It is found in the lysosome. The catalysed reaction is L-tyrosyl-[protein] + ATP = O-phospho-L-tyrosyl-[protein] + ADP + H(+). Its activity is regulated as follows. Activated in response to insulin. Autophosphorylation activates the kinase activity. PTPN1, PTPRE and PTPRF dephosphorylate important tyrosine residues, thereby reducing INSR activity. Inhibited by ENPP1. GRB10 and GRB14 inhibit the catalytic activity of the INSR, they block access of substrates to the activated receptor. SOCS1 and SOCS3 act as negative regulators of INSR activity, they bind to the activated INRS and interfere with the phosphorylation of INSR substrates. In terms of biological role, receptor tyrosine kinase which mediates the pleiotropic actions of insulin. Binding of insulin leads to phosphorylation of several intracellular substrates, including, insulin receptor substrates (IRS1, 2, 3, 4), SHC, GAB1, CBL and other signaling intermediates. Each of these phosphorylated proteins serve as docking proteins for other signaling proteins that contain Src-homology-2 domains (SH2 domain) that specifically recognize different phosphotyrosine residues, including the p85 regulatory subunit of PI3K and SHP2. Phosphorylation of IRSs proteins lead to the activation of two main signaling pathways: the PI3K-AKT/PKB pathway, which is responsible for most of the metabolic actions of insulin, and the Ras-MAPK pathway, which regulates expression of some genes and cooperates with the PI3K pathway to control cell growth and differentiation. Binding of the SH2 domains of PI3K to phosphotyrosines on IRS1 leads to the activation of PI3K and the generation of phosphatidylinositol-(3, 4, 5)-triphosphate (PIP3), a lipid second messenger, which activates several PIP3-dependent serine/threonine kinases, such as PDPK1 and subsequently AKT/PKB. The net effect of this pathway is to produce a translocation of the glucose transporter SLC2A4/GLUT4 from cytoplasmic vesicles to the cell membrane to facilitate glucose transport. Moreover, upon insulin stimulation, activated AKT/PKB is responsible for: anti-apoptotic effect of insulin by inducing phosphorylation of BAD; regulates the expression of gluconeogenic and lipogenic enzymes by controlling the activity of the winged helix or forkhead (FOX) class of transcription factors. Another pathway regulated by PI3K-AKT/PKB activation is mTORC1 signaling pathway which regulates cell growth and metabolism and integrates signals from insulin. AKT mediates insulin-stimulated protein synthesis by phosphorylating TSC2 thereby activating mTORC1 pathway. The Ras/RAF/MAP2K/MAPK pathway is mainly involved in mediating cell growth, survival and cellular differentiation of insulin. Phosphorylated IRS1 recruits GRB2/SOS complex, which triggers the activation of the Ras/RAF/MAP2K/MAPK pathway. In addition to binding insulin, the insulin receptor can bind insulin-like growth factors (IGFI and IGFII). When present in a hybrid receptor with IGF1R, binds IGF1. In adipocytes, inhibits lipolysis. This chain is Insulin receptor (Insr), found in Rattus norvegicus (Rat).